A 280-amino-acid chain; its full sequence is uncharacterized protein (280 aa).

7 helical membrane-spanning segments follow: residues 6-26 (YLVI…TPLV), 38-58 (VLAI…YLFP), 79-99 (IFLL…VFLK), 105-125 (GVLA…ELIF), 144-164 (NQIY…IILW), 171-191 (ISFF…ALMV), and 231-251 (LVFI…TLFA).

The protein localises to the cell membrane. This is an uncharacterized protein from Mycoplasma genitalium (strain ATCC 33530 / DSM 19775 / NCTC 10195 / G37) (Mycoplasmoides genitalium).